An 852-amino-acid chain; its full sequence is Vacuolar protein sorting-associated protein 16 homolog (852 aa).

Belongs to the VPS16 family. As to quaternary structure, probable core component of at least two putative endosomal tethering complexes, the homotypic fusion and vacuole protein sorting (HOPS) complex and the class C core vacuole/endosome tethering (CORVET) complex. Their common core is composed of the class C Vps proteins vps-11, vps-16 and vps-18, which in HOPS further associates with vps-33.1, vps-39 and vps-41 and in CORVET with vps-8 and vps-33.2.

Its subcellular location is the late endosome membrane. The protein resides in the lysosome membrane. Its function is as follows. Plays a role in vesicle-mediated protein trafficking to lysosomal compartments including the endocytic membrane transport pathways. Believed to act as a core component of the putative HOPS and CORVET endosomal tethering complexes which are proposed to be involved in the rab-5-to-rab-7 endosome conversion probably implicating sand-1, and via binding SNAREs and SNARE complexes to mediate tethering and docking events during SNARE-mediated membrane fusion. The HOPS complex is proposed to be recruited to rab-7 on the late endosomal membrane and to regulate late endocytic, phagocytic and autophagic traffic towards lysosomes. Within the HOPS complex, contributes to the normal development of gut granules in the adult intestine. The CORVET complex is proposed to function as a rab-5 effector to mediate early endosome fusion probably in specific endosome subpopulations. Required for recruitment of vps-33.1 to the HOPS complex. Required for fusion of endosomes and autophagosomes with lysosomes; the function is dependent on its association with vps-33.1 but not vps-33.2. The chain is Vacuolar protein sorting-associated protein 16 homolog from Caenorhabditis elegans.